The chain runs to 87 residues: Mu-theraphotoxin-Hs1a (87 aa).

The N-terminal stretch at 1-24 (MVNMKASMFLTFAGLVLLFVVCYA) is a signal peptide. Residues 25–52 (SESEEKEFPKEMLSSIFAVDNDFKQEER) constitute a propeptide that is removed on maturation. Cystine bridges form between C54-C67, C61-C72, and C66-C79.

It belongs to the neurotoxin 10 (Hwtx-1) family. 51 (Hntx-8) subfamily. Hntx-8 sub-subfamily. In terms of tissue distribution, expressed by the venom gland.

The protein resides in the secreted. In terms of biological role, probable sodium channel pore blocker that dose-dependently inhibits voltage-gated sodium channels (VGSC) on DUM neurons in a way similar to tetrodotoxin. Has no effect on the kinetics of activation and inactivation. Seems not to interact with VGSC in an inactivated state. In vivo, reversibly paralyzes cockroaches, and can enhance the muscular contraction elicited by stimulating its nerve. The sequence is that of Mu-theraphotoxin-Hs1a from Cyriopagopus schmidti (Chinese bird spider).